We begin with the raw amino-acid sequence, 196 residues long: Phosphatidyl-N-methylethanolamine N-methyltransferase (196 aa).

Met1 is a topological domain (lumenal). The helical intramembrane region spans 2 to 28 (AIFEINNSFLICAVSIALNPLLWNIAA). At 29–40 (RSEYNHKTLTKL) the chain is on the lumenal side. The chain crosses the membrane as a helical span at residues 41 to 62 (ANGDSKKACYMLAACIFVAGIV). Over 63–89 (RDLIYQNALKQQPTLGIFMNPLVQGIA) the chain is Cytoplasmic. Residues 90-110 (KLIFCFGSVLVLSSMYKLGLV) form a helical membrane-spanning segment. S-adenosyl-L-methionine is bound at residue 94–96 (CFG). Residues 111 to 153 (GTYLGDYFGFLLPERVSGFPFNVNDNPMYNGSTLCFLSTALRY) are Lumenal-facing. Residues 154-174 (GKVAGLLLTLEVFFVYRIALK) traverse the membrane as a helical segment. Residues 175 to 196 (FEEPFTAKIYAARDSKQAKKSE) lie on the Cytoplasmic side of the membrane. Residue 176 to 177 (EE) participates in S-adenosyl-L-methionine binding.

Belongs to the class VI-like SAM-binding methyltransferase superfamily. PEMT/PEM2 methyltransferase family.

The protein resides in the endoplasmic reticulum membrane. The protein localises to the mitochondrion membrane. It catalyses the reaction a 1,2-diacyl-sn-glycero-3-phospho-N-methylethanolamine + S-adenosyl-L-methionine = a 1,2-diacyl-sn-glycero-3-phospho-N,N-dimethylethanolamine + S-adenosyl-L-homocysteine + H(+). The catalysed reaction is a 1,2-diacyl-sn-glycero-3-phospho-N,N-dimethylethanolamine + S-adenosyl-L-methionine = a 1,2-diacyl-sn-glycero-3-phosphocholine + S-adenosyl-L-homocysteine + H(+). Its pathway is phospholipid metabolism; phosphatidylcholine biosynthesis. Functionally, catalyzes the second two steps of the methylation pathway of phosphatidylcholine biosynthesis, the SAM-dependent methylation of phosphatidylmonomethylethanolamine (PMME) to phosphatidyldimethylethanolamine (PDME) and of PDME to phosphatidylcholine (PC). The protein is Phosphatidyl-N-methylethanolamine N-methyltransferase of Schizosaccharomyces pombe (strain 972 / ATCC 24843) (Fission yeast).